The sequence spans 122 residues: MIQSESRLKVADNSGAREILTIKVLGGSGRKTANIGDVIVATIKQATPGGVVKKGEVVKAVIVRTKSGARRVDGSYIKFDENAAVIINDDKTPKGTRIFGPVARELRDSDFMKIVSLAPEVL.

Belongs to the universal ribosomal protein uL14 family. Part of the 50S ribosomal subunit. Forms a cluster with proteins L3 and L19. In the 70S ribosome, L14 and L19 interact and together make contacts with the 16S rRNA in bridges B5 and B8.

Functionally, binds to 23S rRNA. Forms part of two intersubunit bridges in the 70S ribosome. In Latilactobacillus sakei subsp. sakei (strain 23K) (Lactobacillus sakei subsp. sakei), this protein is Large ribosomal subunit protein uL14.